The following is a 427-amino-acid chain: Endothelin-1 receptor (427 aa).

Positions 1-20 are cleaved as a signal peptide; that stretch reads MSIFCLAAYFWLTMVGGVMA. The Extracellular portion of the chain corresponds to 21–80; sequence DNPERYSANLSSHMEDFTPFPGTEINFLGTTHRPPNLALPSNGSMHGYCPQQTKITTAFK. 2 N-linked (GlcNAc...) asparagine glycosylation sites follow: asparagine 29 and asparagine 62. A helical transmembrane segment spans residues 81-102; that stretch reads YINTVISCTIFIVGMVGNATLL. Residues 103-112 are Cytoplasmic-facing; the sequence is RIIYQNKCMR. Residues 113–132 traverse the membrane as a helical segment; the sequence is NGPNALIASLALGDLIYVVI. The Extracellular portion of the chain corresponds to 133-159; the sequence is DLPINVFKLLAGRWPFDHNDFGVFLCK. Cysteine 158 and cysteine 239 are joined by a disulfide. A helical membrane pass occupies residues 160–181; the sequence is LFPFLQKSSVGITVLNLCALSV. At 182-205 the chain is on the cytoplasmic side; the sequence is DRYRAVASWSRVQGIGIPLITAIE. The helical transmembrane segment at 206 to 229 threads the bilayer; sequence IVSIWILSFILAIPEAIGFVMVPF. Residues 230-256 are Extracellular-facing; the sequence is EYKGELHRTCMLNATSKFMEFYQDVKD. A glycan (N-linked (GlcNAc...) asparagine) is linked at asparagine 242. Residues 257 to 278 form a helical membrane-spanning segment; sequence WWLFGFYFCMPLVCTAIFYTLM. At 279–306 the chain is on the cytoplasmic side; that stretch reads TCEMLNRRNGSLRIALSEHLKQRREVAK. The chain crosses the membrane as a helical span at residues 307 to 328; sequence TVFCLVVIFALCWFPLHLSRIL. The Extracellular portion of the chain corresponds to 329-347; it reads KKTVYDEMDKNRCELLSFL. A helical transmembrane segment spans residues 348-372; sequence LLMDYIGINLATMNSCINPIALYFV. At 373–427 the chain is on the cytoplasmic side; the sequence is SKKFKNCFQSCLCCCCHQSKSLMTSVPMNGTSIQWKNQEQNNHNTERSSHKDSMN. The tract at residues 408–427 is disordered; sequence KNQEQNNHNTERSSHKDSMN. A compositionally biased stretch (basic and acidic residues) spans 416–427; it reads NTERSSHKDSMN. A Phosphoserine modification is found at serine 425.

Belongs to the G-protein coupled receptor 1 family. Endothelin receptor subfamily. EDNRA sub-subfamily. Interacts with HDAC7 and KAT5.

It is found in the cell membrane. Functionally, receptor for endothelin-1. Mediates its action by association with G proteins that activate a phosphatidylinositol-calcium second messenger system. The rank order of binding affinities for ET-A is: ET1 &gt; ET2 &gt;&gt; ET3. The polypeptide is Endothelin-1 receptor (Mus musculus (Mouse)).